We begin with the raw amino-acid sequence, 595 residues long: Laccase-18 (595 aa).

An N-terminal signal peptide occupies residues M1–A29. Plastocyanin-like domains lie at M37–G153 and K162–A316. Residues N42 and N48 are each glycosylated (N-linked (GlcNAc...) asparagine). H87 and H89 together coordinate Cu cation. Residue N121 is glycosylated (N-linked (GlcNAc...) asparagine). Residues H132 and H134 each coordinate Cu cation. Residues N206, N345, N382, N402, N409, N439, and N470 are each glycosylated (N-linked (GlcNAc...) asparagine). The 143-residue stretch at D429–P571 folds into the Plastocyanin-like 3 domain. Cu cation-binding residues include N488, H491, H493, H550, C551, H552, H556, and M561. Residues G570 to P595 form a disordered region.

This sequence belongs to the multicopper oxidase family. It depends on Cu cation as a cofactor.

The protein localises to the secreted. It localises to the extracellular space. Its subcellular location is the apoplast. It carries out the reaction 4 hydroquinone + O2 = 4 benzosemiquinone + 2 H2O. Functionally, lignin degradation and detoxification of lignin-derived products. The chain is Laccase-18 (LAC18) from Oryza sativa subsp. japonica (Rice).